A 234-amino-acid chain; its full sequence is Opacity protein opA51 (234 aa).

A signal peptide is located at residue Ala-1.

It belongs to the opacity porin family.

The protein localises to the cell outer membrane. Functionally, implicated in a number of adherence functions. OPA proteins are implicated in pathogenesis and are subject to phase variation. The chain is Opacity protein opA51 (opaB) from Neisseria gonorrhoeae.